We begin with the raw amino-acid sequence, 202 residues long: MHNASDIQSALVPMVIEQTAKGERSFDIYSRLLKERIIFLVGQVEEHMANLIVAQLLFLESESPDKDIFLYINSPGGSVTAGMAIYDTMQFIKPNVSTVCIGQAASMGAFLLAGGEKGKRFCLPNSRVMIHQPLGGFQGQASDIAIHAQEILGIKHKLNLMLSEHTGQPLEVIERDTDRDNFMSATQAVEYGLVDAVMTKRG.

The active-site Nucleophile is the serine 106. Histidine 131 is an active-site residue.

Belongs to the peptidase S14 family. Fourteen ClpP subunits assemble into 2 heptameric rings which stack back to back to give a disk-like structure with a central cavity, resembling the structure of eukaryotic proteasomes.

Its subcellular location is the cytoplasm. It carries out the reaction Hydrolysis of proteins to small peptides in the presence of ATP and magnesium. alpha-casein is the usual test substrate. In the absence of ATP, only oligopeptides shorter than five residues are hydrolyzed (such as succinyl-Leu-Tyr-|-NHMec, and Leu-Tyr-Leu-|-Tyr-Trp, in which cleavage of the -Tyr-|-Leu- and -Tyr-|-Trp bonds also occurs).. In terms of biological role, cleaves peptides in various proteins in a process that requires ATP hydrolysis. Has a chymotrypsin-like activity. Plays a major role in the degradation of misfolded proteins. This chain is ATP-dependent Clp protease proteolytic subunit, found in Shewanella sp. (strain ANA-3).